The sequence spans 30 residues: Trypsin inhibitor 3 (30 aa).

Intrachain disulfides connect C4–C21, C11–C23, and C17–C29.

It belongs to the protease inhibitor I7 (squash-type serine protease inhibitor) family.

It is found in the secreted. Inhibits lysyl endopeptidase and trypsin. In Cucumis melo var. conomon (Oriental pickling melon), this protein is Trypsin inhibitor 3.